The following is a 127-amino-acid chain: MARIAGVDLPRDKRIEIGLTYIYGIGLSRSQEILAETDVNPDTRVKDLSDADVAAIRSEVQNNYEVEGDLRRLEAMSIKRLMDIGTYRGRRHRMGLPVRGQRTRTNARTRRGVRRTVAGKKKASAKK.

The interval 92-127 (HRMGLPVRGQRTRTNARTRRGVRRTVAGKKKASAKK) is disordered. Residues 101 to 127 (QRTRTNARTRRGVRRTVAGKKKASAKK) show a composition bias toward basic residues.

This sequence belongs to the universal ribosomal protein uS13 family. In terms of assembly, part of the 30S ribosomal subunit. Forms a loose heterodimer with protein S19. Forms two bridges to the 50S subunit in the 70S ribosome.

Functionally, located at the top of the head of the 30S subunit, it contacts several helices of the 16S rRNA. In the 70S ribosome it contacts the 23S rRNA (bridge B1a) and protein L5 of the 50S subunit (bridge B1b), connecting the 2 subunits; these bridges are implicated in subunit movement. Contacts the tRNAs in the A and P-sites. The polypeptide is Small ribosomal subunit protein uS13 (Trichodesmium erythraeum (strain IMS101)).